The following is a 1269-amino-acid chain: Protein cramped-like (1269 aa).

Over residues 1–12 (MTVKLGDGGSGE) the composition is skewed to gly residues. The disordered stretch occupies residues 1–165 (MTVKLGDGGS…GKKVRRQWES (165 aa)). Basic and acidic residues-rich tracts occupy residues 13–24 (DGLKKLGKRAAD) and 43–52 (SGTKRDEKTP). The span at 59–74 (PPAPPGAPQAPSPPQG) shows a compositional bias: pro residues. A compositionally biased stretch (gly residues) spans 105–123 (GNAGGSGPRGKGAEGGGSS). Positions 124–147 (SGNVSGVAPAAPAGGSRSSSRNLG) are enriched in low complexity. Residues 151–165 (GEKEEGKKVRRQWES) are compositionally biased toward basic and acidic residues. The SANT domain maps to 161-224 (RQWESWSTED…FYYRTWHKIT (64 aa)). Phosphoserine is present on serine 307. 6 disordered regions span residues 450-541 (IQSG…PGAL), 581-666 (DTRP…EVPA), 757-827 (VRPA…NDSD), 976-1034 (EGLS…DSFQ), 1055-1092 (IPLS…SQGE), and 1115-1157 (VPLS…PSDS). The span at 485–507 (SSGESSPESAPGEGAALSLSSPD) shows a compositional bias: low complexity. Composition is skewed to basic and acidic residues over residues 508 to 518 (APDRPPPRHQD) and 526 to 535 (TPAEGRDSPT). 3 stretches are compositionally biased toward polar residues: residues 757–767 (VRPAQEEQSMT), 774–806 (TVSS…SSGL), and 982–1002 (SPLS…TGTH). 2 stretches are compositionally biased toward low complexity: residues 1055-1070 (IPLS…LSPP) and 1125-1140 (SDSS…SPQP). Serine 1268 is modified (phosphoserine).

Belongs to the cramped family.

Its subcellular location is the nucleus. The sequence is that of Protein cramped-like from Homo sapiens (Human).